The sequence spans 267 residues: Phosphate import ATP-binding protein PstB (267 aa).

The ABC transporter domain maps to 21–262; that stretch reads VAARNLDFYY…PSKQQTEDYI (242 aa). 53 to 60 lines the ATP pocket; sequence GPSGCGKS.

The protein belongs to the ABC transporter superfamily. Phosphate importer (TC 3.A.1.7) family. In terms of assembly, the complex is composed of two ATP-binding proteins (PstB), two transmembrane proteins (PstC and PstA) and a solute-binding protein (PstS).

The protein resides in the cell inner membrane. The catalysed reaction is phosphate(out) + ATP + H2O = ADP + 2 phosphate(in) + H(+). In terms of biological role, part of the ABC transporter complex PstSACB involved in phosphate import. Responsible for energy coupling to the transport system. In Xanthomonas euvesicatoria pv. vesicatoria (strain 85-10) (Xanthomonas campestris pv. vesicatoria), this protein is Phosphate import ATP-binding protein PstB.